Reading from the N-terminus, the 338-residue chain is DNA-directed RNA polymerase subunit alpha (338 aa).

An alpha N-terminal domain (alpha-NTD) region spans residues 1–225 (MLISQRPTLT…ELFGLARELN (225 aa)). Residues 242-338 (YIAAYGMPIE…YIDTDPEETE (97 aa)) form an alpha C-terminal domain (alpha-CTD) region. Positions 314-338 (FDPTQLDGYDAATGDYIDTDPEETE) are disordered.

It belongs to the RNA polymerase alpha chain family. As to quaternary structure, homodimer. The RNAP catalytic core consists of 2 alpha, 1 beta, 1 beta' and 1 omega subunit. When a sigma factor is associated with the core the holoenzyme is formed, which can initiate transcription.

It carries out the reaction RNA(n) + a ribonucleoside 5'-triphosphate = RNA(n+1) + diphosphate. Functionally, DNA-dependent RNA polymerase catalyzes the transcription of DNA into RNA using the four ribonucleoside triphosphates as substrates. The chain is DNA-directed RNA polymerase subunit alpha from Corynebacterium diphtheriae (strain ATCC 700971 / NCTC 13129 / Biotype gravis).